Consider the following 395-residue polypeptide: S-adenosylmethionine synthase (395 aa).

H16 contacts ATP. D18 provides a ligand contact to Mg(2+). E44 provides a ligand contact to K(+). E57 and Q100 together coordinate L-methionine. Residues Q100–D110 are flexible loop. ATP-binding positions include D174–K176, R241–F242, D250, R256–K257, A273, and K277. An L-methionine-binding site is contributed by D250. An L-methionine-binding site is contributed by K281.

This sequence belongs to the AdoMet synthase family. Homotetramer; dimer of dimers. The cofactor is Mg(2+). K(+) is required as a cofactor.

The protein resides in the cytoplasm. It carries out the reaction L-methionine + ATP + H2O = S-adenosyl-L-methionine + phosphate + diphosphate. The protein operates within amino-acid biosynthesis; S-adenosyl-L-methionine biosynthesis; S-adenosyl-L-methionine from L-methionine: step 1/1. Functionally, catalyzes the formation of S-adenosylmethionine (AdoMet) from methionine and ATP. The overall synthetic reaction is composed of two sequential steps, AdoMet formation and the subsequent tripolyphosphate hydrolysis which occurs prior to release of AdoMet from the enzyme. In Limosilactobacillus reuteri (strain DSM 20016) (Lactobacillus reuteri), this protein is S-adenosylmethionine synthase.